Here is a 560-residue protein sequence, read N- to C-terminus: uncharacterized protein (560 aa).

The first 29 residues, 1–29, serve as a signal peptide directing secretion; the sequence is MKSALKKSVVSTSISLILASGMAAFAAHA. 3 residues coordinate Ca(2+): D66, D67, and S132. Catalysis depends on S132, which acts as the Nucleophile. 3-oxoalanine (Ser) is present on S132. H185 is a catalytic residue. Positions 345 and 346 each coordinate Ca(2+).

Belongs to the sulfatase family. Ca(2+) serves as cofactor. The conversion to 3-oxoalanine (also known as C-formylglycine, FGly), of a serine or cysteine residue in prokaryotes and of a cysteine residue in eukaryotes, is critical for catalytic activity.

This is an uncharacterized protein from Escherichia coli (strain K12).